Reading from the N-terminus, the 262-residue chain is Small ribosomal subunit protein eS4C (262 aa).

The S4 RNA-binding domain maps to 42–105 (LPLIVFLRNR…GEHFRLVYDI (64 aa)). A Phosphothreonine modification is found at Thr194.

It belongs to the eukaryotic ribosomal protein eS4 family. As to quaternary structure, component of the small ribosomal subunit (SSU). Mature yeast ribosomes consist of a small (40S) and a large (60S) subunit. The 40S small subunit contains 1 molecule of ribosomal RNA (18S rRNA) and at least 33 different proteins. The large 60S subunit contains 3 rRNA molecules (25S, 5.8S and 5S rRNA) and at least 46 different proteins.

Its subcellular location is the cytoplasm. Component of the ribosome, a large ribonucleoprotein complex responsible for the synthesis of proteins in the cell. The small ribosomal subunit (SSU) binds messenger RNAs (mRNAs) and translates the encoded message by selecting cognate aminoacyl-transfer RNA (tRNA) molecules. The large subunit (LSU) contains the ribosomal catalytic site termed the peptidyl transferase center (PTC), which catalyzes the formation of peptide bonds, thereby polymerizing the amino acids delivered by tRNAs into a polypeptide chain. The nascent polypeptides leave the ribosome through a tunnel in the LSU and interact with protein factors that function in enzymatic processing, targeting, and the membrane insertion of nascent chains at the exit of the ribosomal tunnel. This is Small ribosomal subunit protein eS4C (rps403) from Schizosaccharomyces pombe (strain 972 / ATCC 24843) (Fission yeast).